A 1517-amino-acid polypeptide reads, in one-letter code: DNA-directed RNA polymerase subunit beta' (1517 aa).

Zn(2+) is bound by residues Cys71, Cys73, Cys86, and Cys89. Residues Asp482, Asp484, and Asp486 each coordinate Mg(2+). Positions 812, 886, 893, and 896 each coordinate Zn(2+).

This sequence belongs to the RNA polymerase beta' chain family. The RNAP catalytic core consists of 2 alpha, 1 beta, 1 beta' and 1 omega subunit. When a sigma factor is associated with the core the holoenzyme is formed, which can initiate transcription. It depends on Mg(2+) as a cofactor. Zn(2+) serves as cofactor.

It catalyses the reaction RNA(n) + a ribonucleoside 5'-triphosphate = RNA(n+1) + diphosphate. In terms of biological role, DNA-dependent RNA polymerase catalyzes the transcription of DNA into RNA using the four ribonucleoside triphosphates as substrates. The protein is DNA-directed RNA polymerase subunit beta' of Campylobacter jejuni (strain RM1221).